Consider the following 134-residue polypeptide: uncharacterized protein (134 aa).

Residues 13 to 35 form a helical membrane-spanning segment; sequence FFIAFSAYLVVILLMTAVSVYYL.

The protein localises to the membrane. This is an uncharacterized protein from Archaeoglobus fulgidus (strain ATCC 49558 / DSM 4304 / JCM 9628 / NBRC 100126 / VC-16).